The primary structure comprises 136 residues: Protein NrdI (136 aa).

It belongs to the NrdI family.

Functionally, probably involved in ribonucleotide reductase function. The sequence is that of Protein NrdI from Escherichia coli O127:H6 (strain E2348/69 / EPEC).